The chain runs to 272 residues: Shikimate dehydrogenase (NADP(+)) (272 aa).

Residues 14 to 16 and T61 each bind shikimate; that span reads SKS. The active-site Proton acceptor is the K65. E77 is a binding site for NADP(+). N86 and D102 together coordinate shikimate. NADP(+) contacts are provided by residues 126-130, 149-154, and M213; these read GAGGA and NRTASR. Y215 is a shikimate binding site. Position 237 (G237) interacts with NADP(+).

It belongs to the shikimate dehydrogenase family. Homodimer.

It catalyses the reaction shikimate + NADP(+) = 3-dehydroshikimate + NADPH + H(+). Its pathway is metabolic intermediate biosynthesis; chorismate biosynthesis; chorismate from D-erythrose 4-phosphate and phosphoenolpyruvate: step 4/7. Involved in the biosynthesis of the chorismate, which leads to the biosynthesis of aromatic amino acids. Catalyzes the reversible NADPH linked reduction of 3-dehydroshikimate (DHSA) to yield shikimate (SA). This Citrobacter koseri (strain ATCC BAA-895 / CDC 4225-83 / SGSC4696) protein is Shikimate dehydrogenase (NADP(+)).